Reading from the N-terminus, the 100-residue chain is Mini zinc finger protein 2 (100 aa).

The tract at residues 1–26 (MRKRQVVLRRASPEEPSRSSSTASSL) is disordered. A ZF-HD dimerization-type; degenerate zinc finger spans residues 33 to 83 (YGECQKNHAAAVGGYAVDGCREFMASRGEEGTVAALTCAACGCHRSFHRRE).

In terms of assembly, homo- and heterodimers. Interacts with ZHD1, ZHD3, ZHD5, ZHD8, ZHD10 and ZHD13. As to expression, mostly expressed in stems, flowers and siliques, and, to a lower extent, in inflorescence.

It is found in the cytoplasm. Inhibits zinc finger homeodomain (ZHD) transcription factors by interacting with them to prevent both their nuclear localization and their DNA-binding properties. Involved in integrating signals from multiple hormones by regulating the expression of specific genes. The chain is Mini zinc finger protein 2 (MIF2) from Arabidopsis thaliana (Mouse-ear cress).